A 311-amino-acid chain; its full sequence is Light-independent protochlorophyllide reductase iron-sulfur ATP-binding protein (311 aa).

ATP-binding positions include 10–15 and Lys39; that span reads GIGKST. Position 14 (Ser14) interacts with Mg(2+). The [4Fe-4S] cluster site is built by Cys95 and Cys129. 180 to 181 serves as a coordination point for ATP; the sequence is NR.

This sequence belongs to the NifH/BchL/ChlL family. In terms of assembly, homodimer. Protochlorophyllide reductase is composed of three subunits; ChlL, ChlN and ChlB. It depends on [4Fe-4S] cluster as a cofactor.

It is found in the plastid. It localises to the chloroplast. It carries out the reaction chlorophyllide a + oxidized 2[4Fe-4S]-[ferredoxin] + 2 ADP + 2 phosphate = protochlorophyllide a + reduced 2[4Fe-4S]-[ferredoxin] + 2 ATP + 2 H2O. It functions in the pathway porphyrin-containing compound metabolism; chlorophyll biosynthesis (light-independent). In terms of biological role, component of the dark-operative protochlorophyllide reductase (DPOR) that uses Mg-ATP and reduced ferredoxin to reduce ring D of protochlorophyllide (Pchlide) to form chlorophyllide a (Chlide). This reaction is light-independent. The L component serves as a unique electron donor to the NB-component of the complex, and binds Mg-ATP. The protein is Light-independent protochlorophyllide reductase iron-sulfur ATP-binding protein of Oltmannsiellopsis viridis (Marine flagellate).